A 32-amino-acid polypeptide reads, in one-letter code: Cytochrome b6-f complex subunit 8 (32 aa).

The chain crosses the membrane as a helical span at residues 6-26; it reads IVSLAWAALMVVFTFSLSLVV.

It belongs to the PetN family. The 4 large subunits of the cytochrome b6-f complex are cytochrome b6, subunit IV (17 kDa polypeptide, PetD), cytochrome f and the Rieske protein, while the 4 small subunits are PetG, PetL, PetM and PetN. The complex functions as a dimer.

It is found in the plastid. The protein resides in the chloroplast thylakoid membrane. Component of the cytochrome b6-f complex, which mediates electron transfer between photosystem II (PSII) and photosystem I (PSI), cyclic electron flow around PSI, and state transitions. This is Cytochrome b6-f complex subunit 8 from Illicium oligandrum (Star anise).